A 207-amino-acid polypeptide reads, in one-letter code: dTTP/UTP pyrophosphatase (207 aa).

D79 serves as the catalytic Proton acceptor.

Belongs to the Maf family. YhdE subfamily. The cofactor is a divalent metal cation.

The protein resides in the cytoplasm. It carries out the reaction dTTP + H2O = dTMP + diphosphate + H(+). The catalysed reaction is UTP + H2O = UMP + diphosphate + H(+). In terms of biological role, nucleoside triphosphate pyrophosphatase that hydrolyzes dTTP and UTP. May have a dual role in cell division arrest and in preventing the incorporation of modified nucleotides into cellular nucleic acids. This chain is dTTP/UTP pyrophosphatase, found in Nitrobacter hamburgensis (strain DSM 10229 / NCIMB 13809 / X14).